We begin with the raw amino-acid sequence, 589 residues long: Glutamine--fructose-6-phosphate aminotransferase [isomerizing] (589 aa).

The active-site Nucleophile; for GATase activity is the C2. One can recognise a Glutamine amidotransferase type-2 domain in the interval 2-221; sequence CGIIGIVSLR…DDELGFITPE (220 aa). 2 consecutive SIS domains span residues 286–426 and 445–579; these read VIEE…KMEK and IGEE…PDKP. K584 functions as the For Fru-6P isomerization activity in the catalytic mechanism.

Homodimer.

It localises to the cytoplasm. It catalyses the reaction D-fructose 6-phosphate + L-glutamine = D-glucosamine 6-phosphate + L-glutamate. Its function is as follows. Catalyzes the first step in hexosamine metabolism, converting fructose-6P into glucosamine-6P using glutamine as a nitrogen source. The sequence is that of Glutamine--fructose-6-phosphate aminotransferase [isomerizing] from Sulfurisphaera tokodaii (strain DSM 16993 / JCM 10545 / NBRC 100140 / 7) (Sulfolobus tokodaii).